The following is a 339-amino-acid chain: Tetraacyldisaccharide 4'-kinase (339 aa).

58–65 serves as a coordination point for ATP; sequence TVGGSGKT.

It belongs to the LpxK family.

The enzyme catalyses a lipid A disaccharide + ATP = a lipid IVA + ADP + H(+). It functions in the pathway glycolipid biosynthesis; lipid IV(A) biosynthesis; lipid IV(A) from (3R)-3-hydroxytetradecanoyl-[acyl-carrier-protein] and UDP-N-acetyl-alpha-D-glucosamine: step 6/6. Transfers the gamma-phosphate of ATP to the 4'-position of a tetraacyldisaccharide 1-phosphate intermediate (termed DS-1-P) to form tetraacyldisaccharide 1,4'-bis-phosphate (lipid IVA). This chain is Tetraacyldisaccharide 4'-kinase, found in Shewanella baltica (strain OS155 / ATCC BAA-1091).